The sequence spans 177 residues: Peptide methionine sulfoxide reductase MsrA 2 (177 aa).

Residue C12 is part of the active site.

It belongs to the MsrA Met sulfoxide reductase family.

It catalyses the reaction L-methionyl-[protein] + [thioredoxin]-disulfide + H2O = L-methionyl-(S)-S-oxide-[protein] + [thioredoxin]-dithiol. It carries out the reaction [thioredoxin]-disulfide + L-methionine + H2O = L-methionine (S)-S-oxide + [thioredoxin]-dithiol. Its function is as follows. Has an important function as a repair enzyme for proteins that have been inactivated by oxidation. Catalyzes the reversible oxidation-reduction of methionine sulfoxide in proteins to methionine. This Staphylococcus aureus (strain Mu50 / ATCC 700699) protein is Peptide methionine sulfoxide reductase MsrA 2 (msrA2).